Reading from the N-terminus, the 190-residue chain is dCTP deaminase (190 aa).

Position 113–118 (113–118 (KSTYAR)) interacts with dCTP. Glu-139 serves as the catalytic Proton donor/acceptor. Residues Gln-158, Tyr-172, Lys-181, and Gln-182 each contribute to the dCTP site.

It belongs to the dCTP deaminase family. In terms of assembly, homotrimer.

The enzyme catalyses dCTP + H2O + H(+) = dUTP + NH4(+). Its pathway is pyrimidine metabolism; dUMP biosynthesis; dUMP from dCTP (dUTP route): step 1/2. In terms of biological role, catalyzes the deamination of dCTP to dUTP. This is dCTP deaminase from Chlamydia pneumoniae (Chlamydophila pneumoniae).